Here is an 858-residue protein sequence, read N- to C-terminus: RNA-directed RNA polymerase 2a (858 aa).

The RdRp catalytic domain occupies 511 to 624; it reads KHCFEIDLSK…FSVLPPVGDP (114 aa). The span at 772 to 785 shows a compositional bias: basic and acidic residues; the sequence is TKQREKKDGIERRR. The tract at residues 772–830 is disordered; sequence TKQREKKDGIERRRNDKRRTPTGSYGGGEEAETKVSQAESTGTRSQKSQREGAFKSQAV. Over residues 805–817 the composition is skewed to polar residues; that stretch reads KVSQAESTGTRSQ.

The protein belongs to the ssRNA positive-strand viruses RNA-directed RNA polymerase family. As to quaternary structure, interacts with replication protein 1a.

It carries out the reaction RNA(n) + a ribonucleoside 5'-triphosphate = RNA(n+1) + diphosphate. Its function is as follows. RNA-dependent RNA polymerase which replicates the viral genome composed of 3 RNA segments, RNA1, RNA2 and RNA3. The polypeptide is RNA-directed RNA polymerase 2a (Cucumber mosaic virus (strain As) (CMV)).